Consider the following 280-residue polypeptide: Undecaprenyl-diphosphatase (280 aa).

8 consecutive transmembrane segments (helical) span residues 1–21 (MTIL…FLPV), 41–61 (FVRA…LVLY), 87–107 (FDLY…GFLF), 115–135 (LGSV…MLFV), 147–167 (ITYP…FLPG), 186–206 (KAAA…ATLL), 226–246 (VLLV…KFFI), and 260–280 (YRIL…SLAV).

Belongs to the UppP family.

Its subcellular location is the cell inner membrane. The catalysed reaction is di-trans,octa-cis-undecaprenyl diphosphate + H2O = di-trans,octa-cis-undecaprenyl phosphate + phosphate + H(+). Its function is as follows. Catalyzes the dephosphorylation of undecaprenyl diphosphate (UPP). Confers resistance to bacitracin. The protein is Undecaprenyl-diphosphatase of Porphyromonas gingivalis (strain ATCC BAA-308 / W83).